The following is a 33-amino-acid chain: Photosystem II reaction center protein Psb30 (33 aa).

Residues 8–28 (QLTALAFIVLSGPLVIALLAF) form a helical membrane-spanning segment.

It belongs to the Psb30/Ycf12 family. PSII is composed of 1 copy each of membrane proteins PsbA, PsbB, PsbC, PsbD, PsbE, PsbF, PsbH, PsbI, PsbJ, PsbK, PsbL, PsbM, PsbT, PsbX, PsbY, PsbZ, Psb30/Ycf12, peripheral proteins of the oxygen-evolving complex and a large number of cofactors. It forms dimeric complexes.

It localises to the plastid. It is found in the chloroplast thylakoid membrane. In terms of biological role, a core subunit of photosystem II (PSII), probably helps stabilize the reaction center. The chain is Photosystem II reaction center protein Psb30 from Staurastrum punctulatum (Green alga).